We begin with the raw amino-acid sequence, 463 residues long: Pentatricopeptide repeat-containing protein At2g17670 (463 aa).

The disordered stretch occupies residues methionine 1 to proline 63. 9 PPR repeats span residues glycine 121–proline 157, aspartate 158–proline 192, aspartate 193–aspartate 223, aspartate 229–proline 263, aspartate 264–proline 298, aspartate 299–proline 333, aspartate 334–proline 368, asparagine 369–leucine 403, and glutamate 404–serine 438.

Belongs to the PPR family. P subfamily.

The sequence is that of Pentatricopeptide repeat-containing protein At2g17670 from Arabidopsis thaliana (Mouse-ear cress).